A 502-amino-acid chain; its full sequence is Lysine--tRNA ligase (502 aa).

Mg(2+) contacts are provided by Glu398 and Glu405.

Belongs to the class-II aminoacyl-tRNA synthetase family. In terms of assembly, homodimer. It depends on Mg(2+) as a cofactor.

Its subcellular location is the cytoplasm. The catalysed reaction is tRNA(Lys) + L-lysine + ATP = L-lysyl-tRNA(Lys) + AMP + diphosphate. This chain is Lysine--tRNA ligase, found in Thermotoga sp. (strain RQ2).